The chain runs to 142 residues: Large ribosomal subunit protein uL13 (142 aa).

Belongs to the universal ribosomal protein uL13 family. In terms of assembly, part of the 50S ribosomal subunit.

Its function is as follows. This protein is one of the early assembly proteins of the 50S ribosomal subunit, although it is not seen to bind rRNA by itself. It is important during the early stages of 50S assembly. In Alteromonas mediterranea (strain DSM 17117 / CIP 110805 / LMG 28347 / Deep ecotype), this protein is Large ribosomal subunit protein uL13.